The primary structure comprises 361 residues: Chorismate synthase (361 aa).

Basic and acidic residues predominate over residues 40–49 (DLQHDLDRRR). The interval 40-60 (DLQHDLDRRRPGTSRHTTQRR) is disordered. NADP(+) is bound by residues Arg48 and Arg54. FMN contacts are provided by residues 125–127 (RSS), 237–238 (NA), Gly277, 292–296 (KPTSS), and Arg318.

Belongs to the chorismate synthase family. Homotetramer. FMNH2 serves as cofactor.

The enzyme catalyses 5-O-(1-carboxyvinyl)-3-phosphoshikimate = chorismate + phosphate. It participates in metabolic intermediate biosynthesis; chorismate biosynthesis; chorismate from D-erythrose 4-phosphate and phosphoenolpyruvate: step 7/7. Catalyzes the anti-1,4-elimination of the C-3 phosphate and the C-6 proR hydrogen from 5-enolpyruvylshikimate-3-phosphate (EPSP) to yield chorismate, which is the branch point compound that serves as the starting substrate for the three terminal pathways of aromatic amino acid biosynthesis. This reaction introduces a second double bond into the aromatic ring system. This is Chorismate synthase from Chromohalobacter salexigens (strain ATCC BAA-138 / DSM 3043 / CIP 106854 / NCIMB 13768 / 1H11).